The sequence spans 99 residues: Aspartyl/glutamyl-tRNA(Asn/Gln) amidotransferase subunit C (99 aa).

Belongs to the GatC family. Heterotrimer of A, B and C subunits.

It catalyses the reaction L-glutamyl-tRNA(Gln) + L-glutamine + ATP + H2O = L-glutaminyl-tRNA(Gln) + L-glutamate + ADP + phosphate + H(+). The enzyme catalyses L-aspartyl-tRNA(Asn) + L-glutamine + ATP + H2O = L-asparaginyl-tRNA(Asn) + L-glutamate + ADP + phosphate + 2 H(+). Its function is as follows. Allows the formation of correctly charged Asn-tRNA(Asn) or Gln-tRNA(Gln) through the transamidation of misacylated Asp-tRNA(Asn) or Glu-tRNA(Gln) in organisms which lack either or both of asparaginyl-tRNA or glutaminyl-tRNA synthetases. The reaction takes place in the presence of glutamine and ATP through an activated phospho-Asp-tRNA(Asn) or phospho-Glu-tRNA(Gln). In Corynebacterium diphtheriae (strain ATCC 700971 / NCTC 13129 / Biotype gravis), this protein is Aspartyl/glutamyl-tRNA(Asn/Gln) amidotransferase subunit C.